A 374-amino-acid chain; its full sequence is Protein TAB2 homolog, chloroplastic (374 aa).

The N-terminal 64 residues, 1-64, are a transit peptide targeting the chloroplast; the sequence is MATLGFNTRR…SLSITKEQEV (64 aa). Residues 58–84 are disordered; sequence ITKEQEVANEVEEDDPTSELSYLDPES. Acidic residues predominate over residues 64–74; sequence VANEVEEDDPT.

Its subcellular location is the plastid. The protein resides in the chloroplast. Functionally, nuclear genome-encoded A/U-rich RNA-binding protein involved in the biogenesis of photosystem I (PSI) and II (PSII). Required for the light-controlled accumulation of PSI and PSII during early plant development. Does not seem to be required for the translation of mRNAs of the PSI subunits. This Arabidopsis thaliana (Mouse-ear cress) protein is Protein TAB2 homolog, chloroplastic.